Reading from the N-terminus, the 177-residue chain is NADH-quinone oxidoreductase subunit B (177 aa).

[4Fe-4S] cluster is bound by residues cysteine 53, cysteine 54, cysteine 118, and cysteine 148.

The protein belongs to the complex I 20 kDa subunit family. As to quaternary structure, NDH-1 is composed of 14 different subunits. Subunits NuoB, C, D, E, F, and G constitute the peripheral sector of the complex. Requires [4Fe-4S] cluster as cofactor.

The protein resides in the cell membrane. The enzyme catalyses a quinone + NADH + 5 H(+)(in) = a quinol + NAD(+) + 4 H(+)(out). Its function is as follows. NDH-1 shuttles electrons from NADH, via FMN and iron-sulfur (Fe-S) centers, to quinones in the respiratory chain. The immediate electron acceptor for the enzyme in this species is believed to be a menaquinone. Couples the redox reaction to proton translocation (for every two electrons transferred, four hydrogen ions are translocated across the cytoplasmic membrane), and thus conserves the redox energy in a proton gradient. The sequence is that of NADH-quinone oxidoreductase subunit B from Anoxybacillus flavithermus (strain DSM 21510 / WK1).